The chain runs to 368 residues: FAD-dependent monooxygenase phomE (368 aa).

Position 11 (A11) interacts with FAD. Catalysis depends on residues R140 and Y178. 2 residues coordinate FAD: D249 and G262.

This sequence belongs to the paxM FAD-dependent monooxygenase family. In terms of assembly, monomer. FAD is required as a cofactor.

Functionally, FAD-dependent monooxygenase; part of the gene cluster that mediates the biosynthesis of the phomopsins, a group of hexapeptide mycotoxins which infects lupins and causes lupinosis disease in livestock. The role of phomE within the phomopsins biosynthesis pathway has still to be determined. The pathway starts with the processing of the precursor phomA by several endopeptidases including kexin proteases as well as the cluster-specific S41 family peptidase phomP1 and the oligopeptidase phomG to produce 10 identical copies of the hexapeptide Tyr-Val-Ile-Pro-Ile-Asp. After being excised from the precursor peptide, the core peptides are cyclized and modified post-translationally by enzymes encoded within the gene cluster. The timing and order of proteolysis of the phomA precursor and PTMs are still unknown. Two tyrosinase-like enzymes, phomQ1 and phomQ2, catalyze the chlorination and hydroxylation of Tyr, respectively. PhomYb, is proposed to be involved in the construction of the macrocyclic structure. The other 4 ustYa family proteins may be involved in PTMs that generate the unique structure of phomopsin A. PhomYa is required for the hydroxylation of C-beta of Tyr. PhomYc, phomYd, and phomYe are responsible for the biosynthesis of 2,3-dehydroisoleucine (dIle), 2,3-dehydroaspartic acid (dAsp), and 3,4-dehydroproline (dPro), respectively. While dIle formation by phomYc is indispensable for the installation of dAsp by phomYd, the order of the other PTMs have not been elucidated yet. Most of the biosynthetic enzymes likely have broad substrate specificity, and thus, there might be a metabolic grid from a precursor to phomopsin A. The enzyme(s) responsible for the biosynthesis of 3,4-dehydrovaline (dVal) have also not been identified yet. Finally, phomM acts as an S-adenosylmethionine-dependent alpha-N-methyltransferase that catalyzes two successive N-methylation reactions, converting N-desmethyl-phomopsin A to phomopsin A and phomopsin A further to an N,N-dimethylated congener called phomopsin E. This is FAD-dependent monooxygenase phomE from Diaporthe leptostromiformis (Lupinosis disease fungus).